Consider the following 254-residue polypeptide: PAXIP1-associated glutamate-rich protein 1 (254 aa).

Disordered stretches follow at residues 1–111 (MSLA…PPSE) and 127–254 (LQAE…QRKY). A compositionally biased stretch (basic and acidic residues) spans 45 to 62 (KAEDEGEGGREETEREGS). Residues 78–98 (EPAEEDSEDWCVPCSDEEVEL) are compositionally biased toward acidic residues. The tract at residues 116–160 (YELLAAHGTLELQAEILPRRPPTPEAQSEEERSDEEPEAKEEEEE) is sufficient for interaction with NCOA1. Residue threonine 138 is modified to Phosphothreonine. A compositionally biased stretch (acidic residues) spans 142–159 (QSEEERSDEEPEAKEEEE). Phosphoserine is present on residues serine 143 and serine 148. The tract at residues 161 to 254 (KPHMPTEFDF…SSLFPRQRKY (94 aa)) is sufficient for interaction with ESR1. The span at 195 to 223 (QKREARLDKVLSDMKRHKKLEEQILRTGR) shows a compositional bias: basic and acidic residues. Serine 237 carries the post-translational modification Phosphoserine.

In terms of assembly, component of the KMT2 family MLL2/MLL3 complex (also named ASCOM complex), at least composed of the HMTs KMT2D and/or KMT2C, the common subunits ASH2L, RBBP5, WDR5 and DPY30, and the complex type-specific subunits PAXIP1/PTIP, PAGR1, NCOA6 and KDM6A; PAXIP1 is required for the association with the MLL2/MLL3 complex. Forms a constitutive complex with PAXIP1/PTIP independently of the MLL2/MLL3 complex. Interacts with NCOA1, ESR1, NR3C1, AR. Ubiquitously expressed.

The protein localises to the nucleus. Its association with the histone methyltransferase MLL2/MLL3 complex is suggesting a role in epigenetic transcriptional activation. However, in association with PAXIP1/PTIP is proposed to function at least in part independently of the MLL2/MLL3 complex. Proposed to be recruited by PAXIP1 to sites of DNA damage where the PAGR1:PAXIP1 complex is required for cell survival in response to DNA damage independently of the MLL2/MLL3 complex. However, its function in DNA damage has been questioned. During immunoglobulin class switching in activated B-cells is involved in transcription regulation of downstream switch regions at the immunoglobulin heavy-chain (Igh) locus independently of the MLL2/MLL3 complex. Involved in both estrogen receptor-regulated gene transcription and estrogen-stimulated G1/S cell-cycle transition. Acts as a transcriptional cofactor for nuclear hormone receptors. Inhibits the induction properties of several steroid receptors such as NR3C1, AR and PPARG; the mechanism of inhibition appears to be gene-dependent. This is PAXIP1-associated glutamate-rich protein 1 (PAGR1) from Homo sapiens (Human).